Here is a 508-residue protein sequence, read N- to C-terminus: Argininosuccinate lyase (508 aa).

It belongs to the lyase 1 family. Argininosuccinate lyase subfamily.

It localises to the cytoplasm. The enzyme catalyses 2-(N(omega)-L-arginino)succinate = fumarate + L-arginine. Its pathway is amino-acid biosynthesis; L-arginine biosynthesis; L-arginine from L-ornithine and carbamoyl phosphate: step 3/3. This Methanopyrus kandleri (strain AV19 / DSM 6324 / JCM 9639 / NBRC 100938) protein is Argininosuccinate lyase.